A 173-amino-acid chain; its full sequence is Photosystem I assembly protein Ycf3 (173 aa).

TPR repeat units lie at residues 35 to 68 (AYIY…EENK), 72 to 105 (GETL…NPKQ), and 120 to 153 (GRNA…YPGG).

Belongs to the Ycf3 family.

It localises to the cellular thylakoid membrane. Its function is as follows. Essential for the assembly of the photosystem I (PSI) complex. May act as a chaperone-like factor to guide the assembly of the PSI subunits. This chain is Photosystem I assembly protein Ycf3, found in Prochlorococcus marinus (strain MIT 9301).